The following is a 475-amino-acid chain: Crocetin glucosyltransferase 3 (475 aa).

Catalysis depends on histidine 16, which acts as the Proton acceptor. An anthocyanidin is bound at residue histidine 16. The active-site Charge relay is the aspartate 123. UDP-alpha-D-glucose contacts are provided by threonine 144, alanine 354, glutamine 356, histidine 371, tryptophan 374, asparagine 375, serine 376, and glutamate 379. Alanine 394 contributes to the an anthocyanidin binding site. UDP-alpha-D-glucose-binding residues include glutamate 395 and glutamine 396.

Belongs to the UDP-glycosyltransferase family. As to expression, mainly expressed in stamens.

It carries out the reaction crocetin + UDP-alpha-D-glucose = beta-D-glucosyl crocetin + UDP. The enzyme catalyses beta-D-glucosyl crocetin + UDP-alpha-D-glucose = bis(beta-D-glucosyl) crocetin + UDP. The catalysed reaction is beta-D-gentiobiosyl crocetin + UDP-alpha-D-glucose = beta-D-gentiobiosyl beta-D-glucosyl crocetin + UDP. Functionally, crocetin glucosyltransferase involved in the synthesis of crocin, one of the apocarotenoids responsible for the color and bitter taste of saffron. This Crocus sativus (Saffron) protein is Crocetin glucosyltransferase 3 (GLT3).